A 157-amino-acid chain; its full sequence is 2-C-methyl-D-erythritol 2,4-cyclodiphosphate synthase (157 aa).

A divalent metal cation is bound by residues D8 and H10. 4-CDP-2-C-methyl-D-erythritol 2-phosphate contacts are provided by residues 8–10 (DVH) and 34–35 (HS). H42 is an a divalent metal cation binding site. 4-CDP-2-C-methyl-D-erythritol 2-phosphate-binding positions include 56–58 (DIG), 61–65 (FPDNE), 132–135 (TTTE), F139, and R142.

It belongs to the IspF family. As to quaternary structure, homotrimer. It depends on a divalent metal cation as a cofactor.

It carries out the reaction 4-CDP-2-C-methyl-D-erythritol 2-phosphate = 2-C-methyl-D-erythritol 2,4-cyclic diphosphate + CMP. It functions in the pathway isoprenoid biosynthesis; isopentenyl diphosphate biosynthesis via DXP pathway; isopentenyl diphosphate from 1-deoxy-D-xylulose 5-phosphate: step 4/6. Functionally, involved in the biosynthesis of isopentenyl diphosphate (IPP) and dimethylallyl diphosphate (DMAPP), two major building blocks of isoprenoid compounds. Catalyzes the conversion of 4-diphosphocytidyl-2-C-methyl-D-erythritol 2-phosphate (CDP-ME2P) to 2-C-methyl-D-erythritol 2,4-cyclodiphosphate (ME-CPP) with a corresponding release of cytidine 5-monophosphate (CMP). The sequence is that of 2-C-methyl-D-erythritol 2,4-cyclodiphosphate synthase from Desulforamulus reducens (strain ATCC BAA-1160 / DSM 100696 / MI-1) (Desulfotomaculum reducens).